A 49-amino-acid chain; its full sequence is Large ribosomal subunit protein bL33 (49 aa).

This sequence belongs to the bacterial ribosomal protein bL33 family.

In Lachnoclostridium phytofermentans (strain ATCC 700394 / DSM 18823 / ISDg) (Clostridium phytofermentans), this protein is Large ribosomal subunit protein bL33.